Consider the following 858-residue polypeptide: Translation initiation factor IF-2 (858 aa).

The segment at 59 to 147 is disordered; it reads KEHAEKRRER…GKKLEGQERK (89 aa). Positions 361–530 constitute a tr-type G domain; it reads PRPPVVVVMG…LLVADLLELK (170 aa). Positions 370–377 are G1; sequence GHVDHGKT. 370–377 contacts GTP; it reads GHVDHGKT. The G2 stretch occupies residues 395-399; that stretch reads GITQH. Residues 416–419 form a G3 region; it reads DTPG. Residues 416-420 and 470-473 contribute to the GTP site; these read DTPGH and NKID. Positions 470-473 are G4; that stretch reads NKID. Positions 506–508 are G5; sequence SAK.

The protein belongs to the TRAFAC class translation factor GTPase superfamily. Classic translation factor GTPase family. IF-2 subfamily.

It localises to the cytoplasm. One of the essential components for the initiation of protein synthesis. Protects formylmethionyl-tRNA from spontaneous hydrolysis and promotes its binding to the 30S ribosomal subunits. Also involved in the hydrolysis of GTP during the formation of the 70S ribosomal complex. This chain is Translation initiation factor IF-2, found in Caldicellulosiruptor saccharolyticus (strain ATCC 43494 / DSM 8903 / Tp8T 6331).